Reading from the N-terminus, the 1141-residue chain is MAVPGDAARVRDKPVHSGVSQAPTAGRDCHHRADPASPRDSGCRGCWGDLVLQPLRSSRKLSSALCAGSLSFLLALLVRLVRGEVGCDLEQCKEAAAAEEEEAAPGAEGGVFPGPRGGAPGGGARLSPWLQPSALLFSLLCAFFWMGLYLLRAGVRLPLAVALLAACCGGEALVQIGLGVGEDHLLSLPAAGVVLSCLAAATWLVLRLRLGVLMIALTSAVRTVSLISLERFKVAWRPYLAYLAGVLGILLARYVEQILPQSAEAAPREHLGSQLIAGTKEDIPVFKRRRRSSSVVSAEMSGCSSKSHRRTSLPCIPREQLMGHSEWDHKRGPRGSQSSGTSITVDIAVMGEAHGLITDLLADPSLPPNVCTSLRAVSNLLSTQLTFQAIHKPRVNPVTSLSENYTCSDSEESSEKDKLAIPKRLRRSLPPGLLRRVSSTWTTTTSATGLPTLEPAPVRRDRSTSIKLQEAPSSSPDSWNNPVMMTLTKSRSFTSSYAISAANHVKAKKQSRPGALAKISPLSSPCSSPLQGTPASSLVSKISAVQFPESADTTAKQSLGSHRALTYTQSAPDLSPQILTPPVICSSCGRPYSQGNPADEPLERSGVATRTPSRTDDTAQVTSDYETNNNSDSSDIVQNEDETECLREPLRKASACSTYAPETMMFLDKPILAPEPLVMDNLDSIMEQLNTWNFPIFDLVENIGRKCGRILSQVSYRLFEDMGLFEAFKIPIREFMNYFHALEIGYRDIPYHNRIHATDVLHAVWYLTTQPIPGLSTVINDHGSTSDSDSDSGFTHGHMGYVFSKTYNVTDDKYGCLSGNIPALELMALYVAAAMHDYDHPGRTNAFLVATSAPQAVLYNDRSVLENHHAAAAWNLFMSRPEYNFLINLDHVEFKHFRFLVIEAILATDLKKHFDFVAKFNGKVNDDVGIDWTNENDRLLVCQMCIKLADINGPAKCKELHLQWTDGIVNEFYEQGDEEASLGLPISPFMDRSAPQLANLQESFISHIVGPLCNSYDSAGLMPGKWVEDSDESGDTDDPEEEEEEAPAPNEEETCENNESPKKKTFKRRKIYCQITQHLLQNHKMWKKVIEEEQRLAGIENQSLDQTPQSHSSEQIQAIKEEEEEKGKPRGEEIPTQKPDQ.

A disordered region spans residues 1–42 (MAVPGDAARVRDKPVHSGVSQAPTAGRDCHHRADPASPRDSG). The next 6 membrane-spanning stretches (helical) occupy residues 61 to 81 (LSSALCAGSLSFLLALLVRLV), 130 to 150 (LQPSALLFSLLCAFFWMGLYL), 160 to 180 (AVALLAACCGGEALVQIGLGV), 185 to 205 (LLSLPAAGVVLSCLAAATWLV), 210 to 230 (LGVLMIALTSAVRTVSLISLE), and 232 to 252 (FKVAWRPYLAYLAGVLGILLA). A Phosphoserine modification is found at S312. S428 and S438 each carry phosphoserine; by PKA and PKC. Low complexity predominate over residues 436–448 (RVSSTWTTTTSAT). Positions 436–482 (RVSSTWTTTTSATGLPTLEPAPVRRDRSTSIKLQEAPSSSPDSWNNP) are disordered. The span at 465 to 482 (SIKLQEAPSSSPDSWNNP) shows a compositional bias: polar residues. A phosphoserine mark is found at S492, S520, and S524. The interval 590 to 640 (RPYSQGNPADEPLERSGVATRTPSRTDDTAQVTSDYETNNNSDSSDIVQNE) is disordered. Over residues 608–637 (ATRTPSRTDDTAQVTSDYETNNNSDSSDIV) the composition is skewed to polar residues. The interval 669–1141 (KPILAPEPLV…EEIPTQKPDQ (473 aa)) is interaction with SLFN12. Residues 674-1093 (PEPLVMDNLD…KMWKKVIEEE (420 aa)) enclose the PDEase domain. The active-site Proton donor is H752. AMP is bound at residue H752. Positions 756, 836, 837, and 950 each coordinate Mn(2+). D837, D950, and Q1001 together coordinate AMP. A Mg(2+)-binding site is contributed by D837. 2 disordered regions span residues 1023-1062 (PGKWVEDSDESGDTDDPEEEEEEAPAPNEEETCENNESPK) and 1100-1141 (ENQS…KPDQ). Residues 1029–1056 (DSDESGDTDDPEEEEEEAPAPNEEETCE) show a composition bias toward acidic residues. At S1033 the chain carries Phosphoserine. Residue T1036 is modified to Phosphothreonine. Residues 1100–1113 (ENQSLDQTPQSHSS) are compositionally biased toward polar residues. Residue K1120 forms a Glycyl lysine isopeptide (Lys-Gly) (interchain with G-Cter in SUMO2) linkage. Positions 1125 to 1141 (EKGKPRGEEIPTQKPDQ) are enriched in basic and acidic residues.

It belongs to the cyclic nucleotide phosphodiesterase family. PDE3 subfamily. As to quaternary structure, homodimer. Interacts with SLFN12; direct low affinity interaction which is stimulated by binding of 17beta-estradiol/E2 to PDE3A and that positively regulates the ribonuclease activity of SLFN12. The cofactor is Mn(2+). It depends on Mg(2+) as a cofactor.

The protein resides in the membrane. It localises to the cytoplasm. The protein localises to the cytosol. The enzyme catalyses a nucleoside 3',5'-cyclic phosphate + H2O = a nucleoside 5'-phosphate + H(+). It carries out the reaction 3',5'-cyclic AMP + H2O = AMP + H(+). It catalyses the reaction 3',5'-cyclic GMP + H2O = GMP + H(+). The catalysed reaction is 3',5'-cyclic UMP + H2O = UMP + H(+). With respect to regulation, inhibited by cGMP. Inhibited by 17beta-estradiol. Inhibited by milrinone. Its function is as follows. Cyclic nucleotide phosphodiesterase with specificity for the second messengers cAMP and cGMP, which are key regulators of many important physiological processes. Also has activity toward cUMP. Independently of its catalytic activity it is part of an E2/17beta-estradiol-induced pro-apoptotic signaling pathway. E2 stabilizes the PDE3A/SLFN12 complex in the cytosol, promoting the dephosphorylation of SLFN12 and activating its pro-apoptotic ribosomal RNA/rRNA ribonuclease activity. This apoptotic pathway might be relevant in tissues with high concentration of E2 and be for instance involved in placenta remodeling. This chain is cGMP-inhibited 3',5'-cyclic phosphodiesterase 3A, found in Homo sapiens (Human).